The chain runs to 224 residues: Synaptonemal complex protein 3 (224 aa).

Coiled-coil stretches lie at residues arginine 63–arginine 97 and histidine 137–threonine 171.

As to quaternary structure, interacts with gras-1. Interacts with brc-1 and brd-1.

The protein localises to the chromosome. In terms of biological role, plays a role in early meiotic events; during prophase I contributes to synaptonemal complex (SC) assembly, synapsis and chiasmata formation and stabilization of homologous chromosomes pairing. Required for restricting SC assembly to bridge paired chromosome axes. Required for the timely progression of meiotic crossover recombination. Required for the synapsis checkpoint. The polypeptide is Synaptonemal complex protein 3 (Caenorhabditis elegans).